The chain runs to 362 residues: Protein OCA4 (362 aa).

In terms of biological role, required for replication of Brome mosaic virus (BMV). In Saccharomyces cerevisiae (strain ATCC 204508 / S288c) (Baker's yeast), this protein is Protein OCA4 (OCA4).